A 228-amino-acid chain; its full sequence is Lipoprotein-releasing system ATP-binding protein LolD (228 aa).

In terms of domain architecture, ABC transporter spans 6 to 225 (LEAKDVYKHF…ILHMQDGLWV (220 aa)). 42–49 (GASGSGKS) serves as a coordination point for ATP.

This sequence belongs to the ABC transporter superfamily. Lipoprotein translocase (TC 3.A.1.125) family. In terms of assembly, the complex is composed of two ATP-binding proteins (LolD) and two transmembrane proteins (LolC and LolE).

The protein localises to the cell inner membrane. Its function is as follows. Part of the ABC transporter complex LolCDE involved in the translocation of mature outer membrane-directed lipoproteins, from the inner membrane to the periplasmic chaperone, LolA. Responsible for the formation of the LolA-lipoprotein complex in an ATP-dependent manner. This is Lipoprotein-releasing system ATP-binding protein LolD from Acinetobacter baylyi (strain ATCC 33305 / BD413 / ADP1).